Consider the following 494-residue polypeptide: Cytochrome P450 71D94 (494 aa).

A helical; Signal-anchor for type II membrane protein transmembrane segment spans residues 1 to 21 (MELNLLLVIIILVATYTVSLL). Heme is bound at residue Cys434.

This sequence belongs to the cytochrome P450 family. Heme serves as cofactor.

Its subcellular location is the endoplasmic reticulum membrane. Its function is as follows. Cytochrome P450 oxygenase of undefined substrate. Not active with limonene, (+)- or (-)-piperitone, (-)-isopiperitone, piperitenone or (+)-pulegone. The sequence is that of Cytochrome P450 71D94 (CYP71D94) from Mentha gracilis (Gingermint).